We begin with the raw amino-acid sequence, 763 residues long: Phosphoglycerol transferase I (763 aa).

4 helical membrane passes run 1–21 (MSEL…AWKA), 26–46 (WWFA…ITLF), 77–97 (ILPG…LGWI), and 108–128 (FGYS…SPAF).

Belongs to the OpgB family.

It is found in the cell inner membrane. It carries out the reaction a phosphatidylglycerol + a membrane-derived-oligosaccharide D-glucose = a 1,2-diacyl-sn-glycerol + a membrane-derived-oligosaccharide 6-(glycerophospho)-D-glucose.. It functions in the pathway glycan metabolism; osmoregulated periplasmic glucan (OPG) biosynthesis. Its function is as follows. Transfers a phosphoglycerol residue from phosphatidylglycerol to the membrane-bound nascent glucan backbones. The chain is Phosphoglycerol transferase I from Escherichia coli (strain ATCC 8739 / DSM 1576 / NBRC 3972 / NCIMB 8545 / WDCM 00012 / Crooks).